The sequence spans 293 residues: Protease HtpX homolog (293 aa).

A run of 2 helical transmembrane segments spans residues isoleucine 5–leucine 25 and alanine 43–serine 63. A Zn(2+)-binding site is contributed by histidine 148. Residue glutamate 149 is part of the active site. Histidine 152 provides a ligand contact to Zn(2+). 2 helical membrane-spanning segments follow: residues valine 159–isoleucine 179 and phenylalanine 199–tryptophan 219. Residue glutamate 225 participates in Zn(2+) binding.

This sequence belongs to the peptidase M48B family. Zn(2+) serves as cofactor.

It localises to the cell inner membrane. In Nitrosomonas europaea (strain ATCC 19718 / CIP 103999 / KCTC 2705 / NBRC 14298), this protein is Protease HtpX homolog.